A 556-amino-acid chain; its full sequence is Formate--tetrahydrofolate ligase (556 aa).

65 to 72 (TPAGEGKT) contributes to the ATP binding site.

Belongs to the formate--tetrahydrofolate ligase family.

It catalyses the reaction (6S)-5,6,7,8-tetrahydrofolate + formate + ATP = (6R)-10-formyltetrahydrofolate + ADP + phosphate. It participates in one-carbon metabolism; tetrahydrofolate interconversion. The chain is Formate--tetrahydrofolate ligase from Clostridium acidurici (Gottschalkia acidurici).